The sequence spans 319 residues: HTH-type transcriptional regulator YidZ (319 aa).

Positions 8 to 65 (LDLNLLLCLQLLMQERSVTKAAKRMNVTPSAVSKSLAKLRAWFDDPLFVNTPLGLAPT) constitute an HTH lysR-type domain. A DNA-binding region (H-T-H motif) is located at residues 25–44 (VTKAAKRMNVTPSAVSKSLA).

Belongs to the LysR transcriptional regulatory family.

In terms of biological role, involved in anaerobic NO protection. The chain is HTH-type transcriptional regulator YidZ from Salmonella typhi.